We begin with the raw amino-acid sequence, 619 residues long: Replication restart protein PriA (619 aa).

Positions 119–285 (LKELQKHSAS…KDKALVRLKG (167 aa)) constitute a Helicase ATP-binding domain. 132–139 (GDTGSGKT) is an ATP binding site. A DEAH box motif is present at residues 228–231 (DEEH). 8 residues coordinate Zn(2+): cysteine 336, cysteine 339, cysteine 345, cysteine 348, cysteine 363, cysteine 366, cysteine 376, and cysteine 379. The 162-residue stretch at 371–532 (PIPKICSACQ…ELYPPFSRLC (162 aa)) folds into the Helicase C-terminal domain.

This sequence belongs to the helicase family. PriA subfamily. In terms of assembly, component of the replication restart primosome. It depends on Zn(2+) as a cofactor.

It catalyses the reaction Couples ATP hydrolysis with the unwinding of duplex DNA by translocating in the 3'-5' direction.. The enzyme catalyses ATP + H2O = ADP + phosphate + H(+). Its function is as follows. Initiates the restart of stalled replication forks, which reloads the replicative helicase on sites other than the origin of replication. Recognizes and binds to abandoned replication forks and remodels them to uncover a helicase loading site. Promotes assembly of the primosome at these replication forks. Functionally, important for survival of the bacteria in host cells. This is Replication restart protein PriA from Helicobacter pylori (strain ATCC 700392 / 26695) (Campylobacter pylori).